The sequence spans 88 residues: EMBRYO SURROUNDING FACTOR 1-like protein 3 (88 aa).

An N-terminal signal peptide occupies residues 1–22 (MKLSQIALICIVIASLFAMHEC). 3 cysteine pairs are disulfide-bonded: C41–C56, C54–C80, and C57–C67.

Belongs to the MEG family. As to expression, expressed in stems, leaves and flowers.

In Arabidopsis thaliana (Mouse-ear cress), this protein is EMBRYO SURROUNDING FACTOR 1-like protein 3 (ESFL3).